The sequence spans 547 residues: Heme-binding protein A (547 aa).

Positions 1 to 18 (MKLKATLTLAAATLVLAA) are cleaved as a signal peptide. A lipid anchor (N-palmitoyl cysteine) is attached at Cys-19. Cys-19 carries S-diacylglycerol cysteine lipidation.

The protein belongs to the bacterial solute-binding protein 5 family.

Its subcellular location is the cell inner membrane. Functionally, important role in heme acquisition or metabolism. This chain is Heme-binding protein A (hbpA), found in Haemophilus influenzae (strain ATCC 51907 / DSM 11121 / KW20 / Rd).